Consider the following 495-residue polypeptide: AAA-ATPase At2g18193 (495 aa).

Residues 7-28 (FSFSPSSLFSAYASLTGFLMLF) form a helical membrane-spanning segment. 250–257 (GPPGTGKS) is a binding site for ATP. The disordered stretch occupies residues 451 to 495 (EVSICKATDDDEKQNGSLGCVKKKKKGGKQKGKGKGKGKAKTYLI). The span at 471 to 495 (VKKKKKGGKQKGKGKGKGKAKTYLI) shows a compositional bias: basic residues.

It belongs to the AAA ATPase family. BCS1 subfamily. Mg(2+) is required as a cofactor.

It is found in the membrane. The enzyme catalyses ATP + H2O = ADP + phosphate + H(+). In Arabidopsis thaliana (Mouse-ear cress), this protein is AAA-ATPase At2g18193.